The primary structure comprises 132 residues: Large ribosomal subunit protein uL22c (132 aa).

The protein belongs to the universal ribosomal protein uL22 family. As to quaternary structure, part of the 50S ribosomal subunit.

Its subcellular location is the plastid. It localises to the chloroplast. In terms of biological role, this protein binds specifically to 23S rRNA. The globular domain of the protein is located near the polypeptide exit tunnel on the outside of the subunit, while an extended beta-hairpin is found that lines the wall of the exit tunnel in the center of the 70S ribosome. The polypeptide is Large ribosomal subunit protein uL22c (rpl22) (Staurastrum punctulatum (Green alga)).